The following is a 173-amino-acid chain: Small ribosomal subunit protein mS25 (173 aa).

The protein belongs to the mitochondrion-specific ribosomal protein mS25 family. As to quaternary structure, component of the mitochondrial ribosome small subunit (28S) which comprises a 12S rRNA and about 30 distinct proteins.

Its subcellular location is the mitochondrion. In Bos taurus (Bovine), this protein is Small ribosomal subunit protein mS25 (MRPS25).